Reading from the N-terminus, the 391-residue chain is cAMP-dependent protein kinase regulatory subunit (391 aa).

The disordered stretch occupies residues 1 to 84 (MFKSPFGANA…PPNPESYPAQ (84 aa)). Residues 1-131 (MFKSPFGANA…RLKTAIAGNF (131 aa)) are dimerization and phosphorylation. Residues 38 to 55 (TVTSPTSPNFGMNAQSMF) are compositionally biased toward polar residues. Serine 92 bears the Phosphoserine mark. 3',5'-cyclic AMP contacts are provided by residues 132-261 (LFSH…FLRE), glutamate 210, arginine 219, 264-381 (LLQT…DIKT), glutamate 331, and arginine 340.

The protein belongs to the cAMP-dependent kinase regulatory chain family. Tetramer, composed of 2 regulatory (R) and 2 catalytic (C) subunits. In the presence of cAMP it dissociates into 2 active monomeric C subunits and an R dimer.

The polypeptide is cAMP-dependent protein kinase regulatory subunit (PKAR) (Colletotrichum orbiculare (strain 104-T / ATCC 96160 / CBS 514.97 / LARS 414 / MAFF 240422) (Cucumber anthracnose fungus)).